The following is a 91-amino-acid chain: Small ribosomal subunit protein bS20 (91 aa).

Residues 1–18 are compositionally biased toward basic and acidic residues; that stretch reads MPLHKSAEKRLRQSDRKN. Positions 1–25 are disordered; that stretch reads MPLHKSAEKRLRQSDRKNARNRARK.

This sequence belongs to the bacterial ribosomal protein bS20 family.

Its function is as follows. Binds directly to 16S ribosomal RNA. This chain is Small ribosomal subunit protein bS20, found in Chlorobium phaeovibrioides (strain DSM 265 / 1930) (Prosthecochloris vibrioformis (strain DSM 265)).